The primary structure comprises 292 residues: Homoserine kinase (292 aa).

Residue 84 to 94 (PLSRGLGSSSA) participates in ATP binding.

This sequence belongs to the GHMP kinase family. Homoserine kinase subfamily.

It is found in the cytoplasm. The enzyme catalyses L-homoserine + ATP = O-phospho-L-homoserine + ADP + H(+). It functions in the pathway amino-acid biosynthesis; L-threonine biosynthesis; L-threonine from L-aspartate: step 4/5. Functionally, catalyzes the ATP-dependent phosphorylation of L-homoserine to L-homoserine phosphate. In Campylobacter jejuni subsp. jejuni serotype O:23/36 (strain 81-176), this protein is Homoserine kinase.